A 431-amino-acid chain; its full sequence is Enolase (431 aa).

Gln-168 is a (2R)-2-phosphoglycerate binding site. Catalysis depends on Glu-210, which acts as the Proton donor. Asp-247, Glu-291, and Asp-318 together coordinate Mg(2+). (2R)-2-phosphoglycerate contacts are provided by Lys-343, Arg-372, Ser-373, and Lys-394. Lys-343 (proton acceptor) is an active-site residue.

This sequence belongs to the enolase family. Component of the RNA degradosome, a multiprotein complex involved in RNA processing and mRNA degradation. Mg(2+) is required as a cofactor.

Its subcellular location is the cytoplasm. It localises to the secreted. It is found in the cell surface. It catalyses the reaction (2R)-2-phosphoglycerate = phosphoenolpyruvate + H2O. Its pathway is carbohydrate degradation; glycolysis; pyruvate from D-glyceraldehyde 3-phosphate: step 4/5. Functionally, catalyzes the reversible conversion of 2-phosphoglycerate (2-PG) into phosphoenolpyruvate (PEP). It is essential for the degradation of carbohydrates via glycolysis. The sequence is that of Enolase from Acinetobacter baumannii (strain AYE).